We begin with the raw amino-acid sequence, 162 residues long: NADH-quinone oxidoreductase subunit C (162 aa).

It belongs to the complex I 30 kDa subunit family. NDH-1 is composed of 14 different subunits. Subunits NuoB, C, D, E, F, and G constitute the peripheral sector of the complex.

The protein localises to the cell inner membrane. The enzyme catalyses a quinone + NADH + 5 H(+)(in) = a quinol + NAD(+) + 4 H(+)(out). NDH-1 shuttles electrons from NADH, via FMN and iron-sulfur (Fe-S) centers, to quinones in the respiratory chain. The immediate electron acceptor for the enzyme in this species is believed to be ubiquinone. Couples the redox reaction to proton translocation (for every two electrons transferred, four hydrogen ions are translocated across the cytoplasmic membrane), and thus conserves the redox energy in a proton gradient. This Trichlorobacter lovleyi (strain ATCC BAA-1151 / DSM 17278 / SZ) (Geobacter lovleyi) protein is NADH-quinone oxidoreductase subunit C.